The sequence spans 725 residues: MSEDTVPEAASPPPSQGQHYFDRFSEDDPEYLRLRNRAADLRQDFNLMEQKKRVTMILQSPSFREELEGLIQEQMKKGNNSSNIWALRQIADFMASTSHAVFPASSMNFSMMTPINDLHTADSLNLAKGERLMRCKISSVYRLLDLYGWAQLSDTYVTLRVSKEQDHFLISPKGVSCSEVTASSLIKVNILGEVVEKGSSCFPVDTTGFSLHSAIYAARPDVRCAIHLHTPATAAVSAMKCGLLPVSHNALLVGDMAYYDFNGEMEQEADRINLQKCLGPTCKILVLRNHGMVALGDTVEEAFYKVFHLQAACEVQVSALSSAGGTENLILLEQEKHRPHEVGSVQWAGSTFGPMQKSRLGEHEFEALMRMLDNLGYRTGYTYRHPFVQEKTKHKSEVEIPATVTAFVFEEDGVPVPALRQHAQKQQKEKTRWLNTPNTYLRVNVADEVQRNMGSPRPKTTWMKADEVEKSSSGMPIRIENPNQFVPLYTDPQEVLDMRNKIREQNRQDIKSAGPQSQLLASVIAEKSRSPSTESQLASKGDADTKDELEETVPNPFSQLTDQELEEYKKEVERKKLEQEQEGEKDAATEEPGSPVKSTPASPVQSPTRAGTKSPAVSPSKASEDAKKTEVSEANTEPEPEKPEGVVVNGKEEEPCVEEVLSKGPGQMTTNADTDGDSYKDKTESVTSGPLSPEGSPSKSPSKKKKKFRTPSFLKKSKKKEKVES.

The interval 1–22 (MSEDTVPEAASPPPSQGQHYFD) is disordered. Phosphoserine occurs at positions 11 and 25. Thr-55 bears the Phosphothreonine mark. Ser-60 and Ser-344 each carry phosphoserine. The interval 425–444 (KQQKEKTRWLNTPNTYLRVN) is interaction with calmodulin. The segment at 525 to 725 (AEKSRSPSTE…KSKKKEKVES (201 aa)) is disordered. 2 positions are modified to phosphoserine: Ser-530 and Ser-532. The residue at position 533 (Thr-533) is a Phosphothreonine. Ser-535 carries the post-translational modification Phosphoserine. A Phosphothreonine modification is found at Thr-561. Over residues 566–588 (EEYKKEVERKKLEQEQEGEKDAA) the composition is skewed to basic and acidic residues. Phosphoserine occurs at positions 594, 598, 602, and 606. Residues 596–621 (VKSTPASPVQSPTRAGTKSPAVSPSK) are compositionally biased toward polar residues. Residue Thr-612 is modified to Phosphothreonine. Residues Ser-614, Ser-618, and Ser-620 each carry the phosphoserine modification. Composition is skewed to basic and acidic residues over residues 622–631 (ASEDAKKTEV) and 639–654 (EPEK…KEEE). A Phosphothreonine modification is found at Thr-674. Ser-678, Ser-685, Ser-688, Ser-692, Ser-696, Ser-698, Ser-700, Ser-702, and Ser-712 each carry phosphoserine. Over residues 687–700 (TSGPLSPEGSPSKS) the composition is skewed to low complexity. The span at 701–725 (PSKKKKKFRTPSFLKKSKKKEKVES) shows a compositional bias: basic residues. Residues 703–720 (KKKKKFRTPSFLKKSKKK) form an interaction with calmodulin region.

This sequence belongs to the aldolase class II family. Adducin subfamily. Heterodimer of an alpha and a beta subunit. Found in a complex with ADD2, DMTN and SLC2A1. Interacts with SLC2A1. As to expression, found in liver, kidney, spleen, heart and brain.

It localises to the cytoplasm. It is found in the cytoskeleton. The protein resides in the cell membrane. In terms of biological role, membrane-cytoskeleton-associated protein that promotes the assembly of the spectrin-actin network. Binds to the erythrocyte membrane receptor SLC2A1/GLUT1 and may therefore provide a link between the spectrin cytoskeleton to the plasma membrane. Binds to calmodulin. Calmodulin binds preferentially to the beta subunit. This is Beta-adducin (Add2) from Rattus norvegicus (Rat).